A 148-amino-acid chain; its full sequence is Large ribosomal subunit protein bL9 (148 aa).

It belongs to the bacterial ribosomal protein bL9 family.

Binds to the 23S rRNA. This chain is Large ribosomal subunit protein bL9, found in Dechloromonas aromatica (strain RCB).